The sequence spans 138 residues: Translation initiation factor IF-1, chloroplastic (138 aa).

A chloroplast-targeting transit peptide spans 1–53 (MFTSLHTPILHPRYCHHPTPSCTQFSPLALPPFHRTLSFLAPPPLLPAAPALS). The S1-like domain occupies 58-133 (AKPDKSGEQK…SKGRIVYRLR (76 aa)).

Belongs to the IF-1 family. Component of the 30S ribosomal translation pre-initiation complex which assembles on the 30S ribosome in the order IF-2 and IF-3, IF-1 and N-formylmethionyl-tRNA(fMet); mRNA recruitment can occur at any time during PIC assembly.

The protein localises to the plastid. Its subcellular location is the chloroplast. One of the essential components for the initiation of protein synthesis. Stabilizes the binding of IF-2 and IF-3 on the 30S subunit to which N-formylmethionyl-tRNA(fMet) subsequently binds. Helps modulate mRNA selection, yielding the 30S pre-initiation complex (PIC). Upon addition of the 50S ribosomal subunit IF-1, IF-2 and IF-3 are released leaving the mature 70S translation initiation complex. The polypeptide is Translation initiation factor IF-1, chloroplastic (infA) (Glycine max (Soybean)).